The sequence spans 394 residues: Flap endonuclease 1-A (394 aa).

The interval methionine 1–arginine 105 is N-domain. Aspartate 34 is a Mg(2+) binding site. DNA is bound at residue arginine 71. Mg(2+)-binding residues include aspartate 87, glutamate 159, glutamate 161, aspartate 180, and aspartate 182. An I-domain region spans residues aspartate 123–histidine 254. Glutamate 159 is a binding site for DNA. DNA is bound by residues glycine 232 and aspartate 234. Aspartate 234 serves as a coordination point for Mg(2+). The interval serine 338 to phenylalanine 346 is interaction with PCNA. Positions glutamate 343–lysine 394 are disordered. Over residues lysine 368–alanine 381 the composition is skewed to low complexity. Residues alanine 382–lysine 394 show a composition bias toward basic residues.

This sequence belongs to the XPG/RAD2 endonuclease family. FEN1 subfamily. In terms of assembly, interacts with PCNA. Three molecules of FEN1 bind to one PCNA trimer with each molecule binding to one PCNA monomer. PCNA stimulates the nuclease activity without altering cleavage specificity. Requires Mg(2+) as cofactor. Post-translationally, phosphorylated. Phosphorylation upon DNA damage induces relocalization to the nuclear plasma.

It is found in the nucleus. Its subcellular location is the nucleolus. It localises to the nucleoplasm. The protein localises to the mitochondrion. Functionally, structure-specific nuclease with 5'-flap endonuclease and 5'-3' exonuclease activities involved in DNA replication and repair. During DNA replication, cleaves the 5'-overhanging flap structure that is generated by displacement synthesis when DNA polymerase encounters the 5'-end of a downstream Okazaki fragment. It enters the flap from the 5'-end and then tracks to cleave the flap base, leaving a nick for ligation. Also involved in the long patch base excision repair (LP-BER) pathway, by cleaving within the apurinic/apyrimidinic (AP) site-terminated flap. Acts as a genome stabilization factor that prevents flaps from equilibrating into structures that lead to duplications and deletions. Also possesses 5'-3' exonuclease activity on nicked or gapped double-stranded DNA, and exhibits RNase H activity. Also involved in replication and repair of rDNA and in repairing mitochondrial DNA. This is Flap endonuclease 1-A from Physcomitrium patens (Spreading-leaved earth moss).